Consider the following 639-residue polypeptide: Protein P1 (639 aa).

An N-terminal signal peptide occupies residues 1-20 (MNRFTAYAALFFMFSLCSTA). Transmembrane regions (helical) follow at residues 121–141 (AASV…WTLA), 144–164 (ITLF…LGCI), and 172–192 (ALSL…KIIW). In terms of domain architecture, Peptidase S39 spans 207–399 (VEGYKGFSVP…GITSPNYVFE (193 aa)). Residues His-255, Asp-286, and Ser-354 each act as for protease activity in the active site. Disordered regions lie at residues 455 to 515 (ATNA…PPMD) and 539 to 639 (VSRV…NSKA). Residues 463 to 488 (TAQTNSAEKTAPSTSAEKTALTNKPL) are compositionally biased toward polar residues. The span at 548–561 (QKPKQKKRGRRGGK) shows a compositional bias: basic residues. Polar residues predominate over residues 566-577 (SLPPTSTQSTSG). Residues 587–602 (ASGSAGTSRATTTPAP) show a composition bias toward low complexity.

Belongs to the peptidase S39B family. Post-translationally, specific enzymatic cleavages in vivo yield mature proteins. The protease probably cleaves itself and releases the VPg protein. The VPg protein is probably further cleaved in its C-terminus.

It is found in the membrane. In terms of biological role, precursor from which the VPg molecule is probably released at the onset of the RNA synthesis. Essential for virus replication. Participates, together with the proteins P0 and P7, in the inhibition of the induction of aphid-induced host phytohormones. This could play a role in the attraction to the infected plants by aphids. The sequence is that of Protein P1 from Solanum tuberosum (Potato).